The chain runs to 369 residues: Adenosine 3'-phospho 5'-phosphosulfate transporter 2 (369 aa).

A glycan (N-linked (GlcNAc...) asparagine) is linked at N39. 6 consecutive transmembrane segments (helical) span residues 46 to 66 (LTQF…YGYL), 79 to 99 (YGWY…LIEL), 115 to 135 (MLIA…LGYL), 138 to 158 (PTQV…GVFI), 168 to 188 (VSAA…DSTI), and 191 to 211 (NFNL…AVIG). An N-linked (GlcNAc...) asparagine glycan is attached at N222. 4 helical membrane passes run 235 to 255 (IGFV…PAVA), 266 to 285 (GYAF…VLAL), 292 to 314 (LLAV…LFFA), and 317 to 337 (FTFQ…LNVY).

Belongs to the nucleotide-sugar transporter family. SLC35B subfamily.

The protein localises to the golgi apparatus membrane. The catalysed reaction is 3'-phosphoadenylyl sulfate(in) + adenosine 3',5'-bisphosphate(out) = 3'-phosphoadenylyl sulfate(out) + adenosine 3',5'-bisphosphate(in). Probably functions as a 3'-phosphoadenylyl sulfate:adenosine 3',5'-bisphosphate antiporter at the Golgi membranes. Mediates the transport from the cytosol into the lumen of the Golgi of 3'-phosphoadenylyl sulfate/adenosine 3'-phospho 5'-phosphosulfate (PAPS), a universal sulfuryl donor for sulfation events that take place in that compartment. This is Adenosine 3'-phospho 5'-phosphosulfate transporter 2 from Mus musculus (Mouse).